The sequence spans 813 residues: Striatin-interacting protein 1 homolog (813 aa).

Disordered regions lie at residues 1–41 and 307–379; these read MDGV…SEAP and RAAS…RDEV. Over residues 9 to 18 the composition is skewed to polar residues; it reads NNKQKQNQML. A compositionally biased stretch (basic and acidic residues) spans 22 to 35; the sequence is MRGEFTRNQRKDSE. Over residues 307 to 316 the composition is skewed to low complexity; that stretch reads RAASPPASAS. Serine 310 carries the phosphoserine modification. The segment covering 331–352 has biased composition (basic and acidic residues); sequence KALIKQDNLDTFNEKDPYKADD. Over residues 353–367 the composition is skewed to acidic residues; it reads SHEDEEENDDNDNSL.

The protein belongs to the STRIP family. As to quaternary structure, part of the core of STRIPAK complexes composed of PP2A catalytic and scaffolding subunits, the striatins (PP2A regulatory subunits), the striatin-associated proteins MOB4, STRIP1 and STRIP2, PDCD10 and members of the STE20 kinases, such as STK24 and STK26.

Its subcellular location is the cytoplasm. Its function is as follows. Plays a role in the regulation of cell morphology and cytoskeletal organization. Required in the cortical actin filament dynamics and cell shape. Part of the striatin-interacting phosphatase and kinase (STRIPAK) complexes. STRIPAK complexes have critical roles in protein (de)phosphorylation and are regulators of multiple signaling pathways including Hippo, MAPK, nuclear receptor and cytoskeleton remodeling. Different types of STRIPAK complexes are involved in a variety of biological processes such as cell growth, differentiation, apoptosis, metabolism and immune regulation. In Danio rerio (Zebrafish), this protein is Striatin-interacting protein 1 homolog (strip1).